The chain runs to 1642 residues: Cholesterol transporter ABCA5 (1642 aa).

Residues serine 32 to methionine 52 form a helical membrane-spanning segment. N-linked (GlcNAc...) asparagine glycosylation is present at asparagine 86. Helical transmembrane passes span valine 220–isoleucine 240, leucine 264–isoleucine 284, isoleucine 297–leucine 317, glycine 328–isoleucine 348, leucine 355–methionine 375, and leucine 396–tyrosine 416. Asparagine 458 is a glycosylation site (N-linked (GlcNAc...) asparagine). The ABC transporter 1 domain maps to isoleucine 478–tyrosine 713. Glycine 514 to serine 521 lines the ATP pocket. A run of 2 helical transmembrane segments spans residues leucine 866–phenylalanine 886 and valine 967–isoleucine 987. N-linked (GlcNAc...) asparagine glycosylation occurs at asparagine 996. The next 6 membrane-spanning stretches (helical) occupy residues leucine 1021 to methionine 1041, valine 1071 to phenylalanine 1091, phenylalanine 1102 to isoleucine 1122, phenylalanine 1139 to glycine 1159, alanine 1169 to isoleucine 1189, and leucine 1207 to tyrosine 1227. The interval lysine 1249–valine 1268 is disordered. The segment covering proline 1259–valine 1268 has biased composition (acidic residues). One can recognise an ABC transporter 2 domain in the interval isoleucine 1290–lysine 1533. Glycine 1333–serine 1340 provides a ligand contact to ATP.

Belongs to the ABC transporter superfamily. ABCA family. N-glycosylated. Ubiquitously expressed. Highly expressed in testis, skeletal muscle, kidney, liver and placenta. Expressed in both the epithelial and mesenchymal compartments, present within the outer root sheath (ORS) of the hair follicle as well as dermal sheath. Expressed in multiple regions of the brain, including the hippocampus, superior frontal and inferior temporal cortices. Strongly expressed in neurons and moderately in microglia, with only weak expression in astrocytes and oligodendrocytes.

The protein localises to the golgi apparatus membrane. It localises to the lysosome membrane. The protein resides in the late endosome membrane. Its subcellular location is the cell membrane. The enzyme catalyses cholesterol(in) + ATP + H2O = cholesterol(out) + ADP + phosphate + H(+). In terms of biological role, cholesterol efflux transporter in macrophages that is responsible for APOAI/high-density lipoproteins (HDL) formation at the plasma membrane under high cholesterol levels and participates in reverse cholesterol transport. May play a role in the processing of autolysosomes. The sequence is that of Cholesterol transporter ABCA5 from Homo sapiens (Human).